A 300-amino-acid chain; its full sequence is Ribonuclease HIII (300 aa).

In terms of domain architecture, RNase H type-2 spans 86 to 300 (RSRIGVDESG…FNEVLGSGNQ (215 aa)). Residues D92, E93, and D196 each contribute to the a divalent metal cation site.

The protein belongs to the RNase HII family. RnhC subfamily. Mn(2+) serves as cofactor. It depends on Mg(2+) as a cofactor.

It is found in the cytoplasm. It carries out the reaction Endonucleolytic cleavage to 5'-phosphomonoester.. Functionally, endonuclease that specifically degrades the RNA of RNA-DNA hybrids. This chain is Ribonuclease HIII, found in Chlamydia trachomatis serovar L2 (strain ATCC VR-902B / DSM 19102 / 434/Bu).